A 270-amino-acid chain; its full sequence is Diaminopimelate epimerase (270 aa).

3 residues coordinate substrate: asparagine 15, glutamine 49, and asparagine 66. Cysteine 75 serves as the catalytic Proton donor. Residues 76 to 77 (GN), asparagine 155, asparagine 187, and 204 to 205 (ER) contribute to the substrate site. Cysteine 213 (proton acceptor) is an active-site residue. A substrate-binding site is contributed by 214–215 (GS).

Belongs to the diaminopimelate epimerase family. As to quaternary structure, homodimer.

It localises to the cytoplasm. It carries out the reaction (2S,6S)-2,6-diaminopimelate = meso-2,6-diaminopimelate. Its pathway is amino-acid biosynthesis; L-lysine biosynthesis via DAP pathway; DL-2,6-diaminopimelate from LL-2,6-diaminopimelate: step 1/1. Functionally, catalyzes the stereoinversion of LL-2,6-diaminopimelate (L,L-DAP) to meso-diaminopimelate (meso-DAP), a precursor of L-lysine and an essential component of the bacterial peptidoglycan. The sequence is that of Diaminopimelate epimerase from Rickettsia prowazekii (strain Madrid E).